The chain runs to 787 residues: Integrin beta-6 (787 aa).

The signal sequence occupies residues 1–21 (MGIELVCLFLLLLGRNDHVQG). The PSI domain occupies 22–71 (GCAWGGAESCSDCLLTGPHCAWCSQENFTHLSGAGERCDTPANLLAKGCQ). The Extracellular portion of the chain corresponds to 22–708 (GCAWGGAESC…KDCPKPPNIP (687 aa)). 19 disulfide bridges follow: Cys-23–Cys-41, Cys-31–Cys-454, Cys-34–Cys-59, Cys-44–Cys-70, Cys-197–Cys-204, Cys-252–Cys-293, Cys-394–Cys-406, Cys-426–Cys-452, Cys-456–Cys-476, Cys-467–Cys-479, Cys-481–Cys-490, Cys-492–Cys-519, Cys-502–Cys-517, Cys-511–Cys-522, Cys-524–Cys-537, Cys-539–Cys-560, Cys-544–Cys-558, Cys-552–Cys-563, and Cys-565–Cys-574. N-linked (GlcNAc...) asparagine glycosylation is found at Asn-48 and Asn-97. The VWFA domain occupies 131-371 (YPVDLYYLMD…QLIISAYEEL (241 aa)). Mg(2+)-binding residues include Asp-140, Ser-142, and Ser-144. Residues Ser-144, Asp-147, Asp-148, and Glu-179 each contribute to the Ca(2+) site. Ca(2+) contacts are provided by Asn-235, Asp-237, Pro-239, and Glu-240. Glu-240 serves as a coordination point for Mg(2+). Asn-260 is a glycosylation site (N-linked (GlcNAc...) asparagine). Residues Asp-271 and Lys-355 each contribute to the Ca(2+) site. Asn-387 is a glycosylation site (N-linked (GlcNAc...) asparagine). Residue Asn-418 is glycosylated (N-linked (GlcNAc...) asparagine). I-EGF domains are found at residues 456–491 (CQRE…PHCE), 492–538 (CGED…PYCQ), 539–575 (CDNF…EYCN), and 576–615 (CTTN…PTCE). N-linked (GlcNAc...) asparagine glycans are attached at residues Asn-463 and Asn-471. A glycan (N-linked (GlcNAc...) asparagine) is linked at Asn-541. N-linked (GlcNAc...) asparagine glycosylation is present at Asn-575. Cystine bridges form between Cys-576-Cys-599, Cys-583-Cys-597, Cys-591-Cys-602, Cys-604-Cys-614, Cys-617-Cys-620, Cys-624-Cys-669, Cys-630-Cys-649, Cys-633-Cys-645, and Cys-677-Cys-701. Residues 709 to 729 (MIMLGVSLAILLIGVVLLCIW) traverse the membrane as a helical segment. The interaction with HAX1 stretch occupies residues 730–757 (KLLVSFHDRKEVAKFEAERSKAKWQTGT). Over 730–787 (KLLVSFHDRKEVAKFEAERSKAKWQTGTNPLYRGSTSTFKNVTYKHREKHKAGLSSDG) the chain is Cytoplasmic.

Belongs to the integrin beta chain family. In terms of assembly, heterodimer of an alpha and a beta subunit. Interacts with FLNB. Interacts with HAX1. ITGAV:ITGB6 interacts with FBN1. ITGAV:ITGB6 interacts with TGFB1.

It localises to the cell membrane. The protein resides in the cell junction. The protein localises to the focal adhesion. Functionally, integrin alpha-V:beta-6 (ITGAV:ITGB6) is a receptor for fibronectin and cytotactin. It recognizes the sequence R-G-D in its ligands. ITGAV:ITGB6 acts as a receptor for fibrillin-1 (FBN1) and mediates R-G-D-dependent cell adhesion to FBN1. Integrin alpha-V:beta-6 (ITGAV:ITGB6) mediates R-G-D-dependent release of transforming growth factor beta-1 (TGF-beta-1) from regulatory Latency-associated peptide (LAP), thereby playing a key role in TGF-beta-1 activation. The sequence is that of Integrin beta-6 (Itgb6) from Mus musculus (Mouse).